A 1287-amino-acid chain; its full sequence is DNA-directed RNA polymerase subunit beta (1287 aa).

Belongs to the RNA polymerase beta chain family. In terms of assembly, the RNAP catalytic core consists of 2 alpha, 1 beta, 1 beta' and 1 omega subunit. When a sigma factor is associated with the core the holoenzyme is formed, which can initiate transcription.

The enzyme catalyses RNA(n) + a ribonucleoside 5'-triphosphate = RNA(n+1) + diphosphate. DNA-dependent RNA polymerase catalyzes the transcription of DNA into RNA using the four ribonucleoside triphosphates as substrates. This is DNA-directed RNA polymerase subunit beta from Salinibacter ruber (strain DSM 13855 / M31).